The primary structure comprises 74 residues: Large ribosomal subunit protein bL31 (74 aa).

Positions 16, 18, 38, and 41 each coordinate Zn(2+).

Belongs to the bacterial ribosomal protein bL31 family. Type A subfamily. Part of the 50S ribosomal subunit. Zn(2+) serves as cofactor.

Binds the 23S rRNA. This is Large ribosomal subunit protein bL31 from Acinetobacter baumannii (strain AB307-0294).